The chain runs to 427 residues: D-inositol 3-phosphate glycosyltransferase (427 aa).

His12 is a binding site for 1D-myo-inositol 3-phosphate. Residues 18 to 19 and Gly26 each bind UDP-N-acetyl-alpha-D-glucosamine; that span reads QP. 1D-myo-inositol 3-phosphate contacts are provided by residues 23-28, Lys81, Tyr113, Thr137, and Arg157; that span reads DAGGMN. 3 residues coordinate UDP-N-acetyl-alpha-D-glucosamine: Arg234, Lys239, and Arg297. Mg(2+)-binding residues include Tyr306, Gln307, and Ala309. UDP-N-acetyl-alpha-D-glucosamine is bound by residues Glu319 and Glu327. Residue Thr333 participates in Mg(2+) binding.

Belongs to the glycosyltransferase group 1 family. MshA subfamily. In terms of assembly, homodimer.

It catalyses the reaction 1D-myo-inositol 3-phosphate + UDP-N-acetyl-alpha-D-glucosamine = 1D-myo-inositol 2-acetamido-2-deoxy-alpha-D-glucopyranoside 3-phosphate + UDP + H(+). Its function is as follows. Catalyzes the transfer of a N-acetyl-glucosamine moiety to 1D-myo-inositol 3-phosphate to produce 1D-myo-inositol 2-acetamido-2-deoxy-glucopyranoside 3-phosphate in the mycothiol biosynthesis pathway. In Corynebacterium diphtheriae (strain ATCC 700971 / NCTC 13129 / Biotype gravis), this protein is D-inositol 3-phosphate glycosyltransferase.